The chain runs to 1567 residues: ABC multidrug transporter MDR1 (1567 aa).

Pro residues predominate over residues 1–11 (MASQPPQPPSG). A disordered region spans residues 1–37 (MASQPPQPPSGQPDTQYEEYQSEVITETTNRPTPAAD). The span at 22-32 (SEVITETTNRP) shows a compositional bias: polar residues. N-linked (GlcNAc...) asparagine glycosylation is found at asparagine 149, asparagine 157, and asparagine 356. Residues 167 to 432 (VQYQDTFLSP…FEEMGWYCPP (266 aa)) enclose the ABC transporter 1 domain. 6 helical membrane passes run 543-563 (STIA…SLFF), 571-591 (GFFA…LMSI), 636-656 (IPIK…LGGL), 661-681 (AKFF…SAIF), 691-711 (IPQA…YTGF), and 798-818 (LGIL…VSEL). N-linked (GlcNAc...) asparagine glycosylation is found at asparagine 819, asparagine 895, and asparagine 912. The ABC transporter 2 domain maps to 891–1134 (FTWRNVTYDI…LLNYFETHGA (244 aa)). ATP is bound at residue 927–934 (GVSGAGKT). The interval 1172-1202 (ESRHVQQELDRIQSETSKRNEGHGQSAEKEP) is disordered. The helical transmembrane segment at 1231 to 1251 (IWGKLLLGLTSALFIGFSFFL) threads the bilayer. N-linked (GlcNAc...) asparagine glycosylation is present at asparagine 1253. The next 5 helical transmembrane spans lie at 1257–1277 (AGLQ…SSLV), 1305–1325 (VFLL…GIIA), 1345–1365 (ILLL…QMII), 1372–1392 (ETAG…NGVL), and 1498–1518 (GIGW…YYLI).

It belongs to the ABC transporter superfamily. ABCG family. PDR (TC 3.A.1.205) subfamily.

The protein resides in the cell membrane. It carries out the reaction voriconazole(in) + ATP + H2O = voriconazole(out) + ADP + phosphate + H(+). The catalysed reaction is fluconazole(in) + ATP + H2O = fluconazole(out) + ADP + phosphate + H(+). The enzyme catalyses (R)-miconazole(in) + ATP + H2O = (R)-miconazole(out) + ADP + phosphate + H(+). It catalyses the reaction (S)-miconazole(in) + ATP + H2O = (S)-miconazole(out) + ADP + phosphate + H(+). Pleiotropic ABC efflux transporter that may be involved in the modulation susceptibility to a wide range of unrelated cytotoxic compounds. This is ABC multidrug transporter MDR1 from Trichophyton tonsurans (strain CBS 112818) (Scalp ringworm fungus).